Consider the following 268-residue polypeptide: Tryptophan synthase alpha chain (268 aa).

Residues E49 and D60 each act as proton acceptor in the active site.

Belongs to the TrpA family. In terms of assembly, tetramer of two alpha and two beta chains.

It catalyses the reaction (1S,2R)-1-C-(indol-3-yl)glycerol 3-phosphate + L-serine = D-glyceraldehyde 3-phosphate + L-tryptophan + H2O. The protein operates within amino-acid biosynthesis; L-tryptophan biosynthesis; L-tryptophan from chorismate: step 5/5. Its function is as follows. The alpha subunit is responsible for the aldol cleavage of indoleglycerol phosphate to indole and glyceraldehyde 3-phosphate. The polypeptide is Tryptophan synthase alpha chain (Yersinia enterocolitica serotype O:8 / biotype 1B (strain NCTC 13174 / 8081)).